Reading from the N-terminus, the 509-residue chain is Aspartyl/glutamyl-tRNA(Asn/Gln) amidotransferase subunit B (509 aa).

It belongs to the GatB/GatE family. GatB subfamily. In terms of assembly, heterotrimer of A, B and C subunits.

The catalysed reaction is L-glutamyl-tRNA(Gln) + L-glutamine + ATP + H2O = L-glutaminyl-tRNA(Gln) + L-glutamate + ADP + phosphate + H(+). It catalyses the reaction L-aspartyl-tRNA(Asn) + L-glutamine + ATP + H2O = L-asparaginyl-tRNA(Asn) + L-glutamate + ADP + phosphate + 2 H(+). In terms of biological role, allows the formation of correctly charged Asn-tRNA(Asn) or Gln-tRNA(Gln) through the transamidation of misacylated Asp-tRNA(Asn) or Glu-tRNA(Gln) in organisms which lack either or both of asparaginyl-tRNA or glutaminyl-tRNA synthetases. The reaction takes place in the presence of glutamine and ATP through an activated phospho-Asp-tRNA(Asn) or phospho-Glu-tRNA(Gln). In Mycobacterium leprae (strain Br4923), this protein is Aspartyl/glutamyl-tRNA(Asn/Gln) amidotransferase subunit B.